The chain runs to 123 residues: Nitrogen regulatory protein GlnK2 (123 aa).

Residues 38–40 (SLT) and S49 contribute to the ATP site. Residue S49 participates in ADP binding. Y62 carries the O-UMP-tyrosine modification. ATP is bound by residues V75, 98 to 101 (GDGK), and R114. Residue 98-101 (GDGK) coordinates ADP. 98–101 (GDGK) contributes to the AMP binding site.

Belongs to the P(II) protein family. As to quaternary structure, homotrimer. Interacts with the glutamine synthetase 3 (GS3) in the presence of 2-oxoglutarate. Interacts in vitro with Amt1 after ammonium shock. May also interact with Amt2. In terms of processing, uridylylated on Tyr-62.

Its subcellular location is the cytoplasm. Binds the effectors ADP and ATP. Also binds AMP with high affinity, raising the possibility that AMP could be an important PII effector, at least in archaea. The change in the ATP/AMP ratio may be more relevant for describing the energy status in the cells than the ATP/ADP ratio alone. Its function is as follows. Involved in the regulation of nitrogen metabolism. Regulates the activity of its targets by protein-protein interaction in response to the nitrogen status of the cell. Increases the activity of the glutamine synthetase 3 in the presence of 2-oxoglutarate. May regulate the activity of the ammonia channel Amt2 via direct interaction. This is Nitrogen regulatory protein GlnK2 from Haloferax mediterranei (strain ATCC 33500 / DSM 1411 / JCM 8866 / NBRC 14739 / NCIMB 2177 / R-4) (Halobacterium mediterranei).